The following is a 122-amino-acid chain: Large ribosomal subunit protein uL14 (122 aa).

It belongs to the universal ribosomal protein uL14 family. Part of the 50S ribosomal subunit. Forms a cluster with proteins L3 and L19. In the 70S ribosome, L14 and L19 interact and together make contacts with the 16S rRNA in bridges B5 and B8.

In terms of biological role, binds to 23S rRNA. Forms part of two intersubunit bridges in the 70S ribosome. This is Large ribosomal subunit protein uL14 from Shouchella clausii (strain KSM-K16) (Alkalihalobacillus clausii).